A 612-amino-acid chain; its full sequence is UvrABC system protein C (612 aa).

One can recognise a GIY-YIG domain in the interval 11 to 90 (TASGVYLMKG…IKKYRPRYNI (80 aa)). One can recognise a UVR domain in the interval 200–235 (SEVVESLQHQMAAAAERMAFEEAARLRDQLRAIEQT).

It belongs to the UvrC family. As to quaternary structure, interacts with UvrB in an incision complex.

It localises to the cytoplasm. The UvrABC repair system catalyzes the recognition and processing of DNA lesions. UvrC both incises the 5' and 3' sides of the lesion. The N-terminal half is responsible for the 3' incision and the C-terminal half is responsible for the 5' incision. This is UvrABC system protein C from Syntrophotalea carbinolica (strain DSM 2380 / NBRC 103641 / GraBd1) (Pelobacter carbinolicus).